A 463-amino-acid chain; its full sequence is ATP-dependent protease ATPase subunit HslU (463 aa).

Residues isoleucine 19, 61 to 66, aspartate 277, glutamate 341, and arginine 413 contribute to the ATP site; that span reads GVGKTE.

This sequence belongs to the ClpX chaperone family. HslU subfamily. As to quaternary structure, a double ring-shaped homohexamer of HslV is capped on each side by a ring-shaped HslU homohexamer. The assembly of the HslU/HslV complex is dependent on binding of ATP.

The protein localises to the cytoplasm. Functionally, ATPase subunit of a proteasome-like degradation complex; this subunit has chaperone activity. The binding of ATP and its subsequent hydrolysis by HslU are essential for unfolding of protein substrates subsequently hydrolyzed by HslV. HslU recognizes the N-terminal part of its protein substrates and unfolds these before they are guided to HslV for hydrolysis. The sequence is that of ATP-dependent protease ATPase subunit HslU from Bacillus cereus (strain B4264).